The sequence spans 202 residues: Transmembrane 4 L6 family member 4 (202 aa).

Over 1–9 (MCTGGCARC) the chain is Cytoplasmic. The helical transmembrane segment at 10-30 (LGGTLIPLAFFGFLANILLFF) threads the bilayer. Topologically, residues 31 to 45 (PGGKVIDDNDHLSQE) are extracellular. A helical transmembrane segment spans residues 46–66 (IWFFGGILGSGVLMIFPALVF). Over 67 to 93 (LGLKNNDCCGCCGNEGCGKRFAMFTST) the chain is Cytoplasmic. Residues 94 to 114 (IFAVVGFLGAGYSFIISAISI) form a helical membrane-spanning segment. Residues 115-158 (NKGPKCLMANSTWGYPFHDGDYLNDEALWNKCREPLNVVPWNLT) lie on the Extracellular side of the membrane. N124 and N156 each carry an N-linked (GlcNAc...) asparagine glycan. A helical membrane pass occupies residues 159 to 179 (LFSILLVVGGIQMVLCAIQVV). Topologically, residues 180 to 202 (NGLLGTLCGDCQCCGCCGGDGPV) are cytoplasmic.

The protein belongs to the L6 tetraspanin family. N-glycosylated. Glycosylation is required for the growth inhibitory effect. In terms of tissue distribution, jejunum and liver.

The protein resides in the membrane. In terms of biological role, regulates the adhesive and proliferative status of intestinal epithelial cells. Can mediate density-dependent cell proliferation. This is Transmembrane 4 L6 family member 4 (TM4SF4) from Homo sapiens (Human).